An 810-amino-acid chain; its full sequence is Glycerol-3-phosphate acyltransferase (810 aa).

Residues 305-310 (CHRSHI) carry the HXXXXD motif motif.

This sequence belongs to the GPAT/DAPAT family.

It is found in the cell inner membrane. The catalysed reaction is sn-glycerol 3-phosphate + an acyl-CoA = a 1-acyl-sn-glycero-3-phosphate + CoA. It functions in the pathway phospholipid metabolism; CDP-diacylglycerol biosynthesis; CDP-diacylglycerol from sn-glycerol 3-phosphate: step 1/3. The chain is Glycerol-3-phosphate acyltransferase from Haemophilus influenzae (strain PittEE).